The following is a 165-amino-acid chain: NADPH-dependent 7-cyano-7-deazaguanine reductase (165 aa).

Cys56 serves as the catalytic Thioimide intermediate. Asp63 functions as the Proton donor in the catalytic mechanism. Substrate is bound by residues 78–80 and 97–98; these read VES and HE.

This sequence belongs to the GTP cyclohydrolase I family. QueF type 1 subfamily.

It is found in the cytoplasm. It carries out the reaction 7-aminomethyl-7-carbaguanine + 2 NADP(+) = 7-cyano-7-deazaguanine + 2 NADPH + 3 H(+). The protein operates within tRNA modification; tRNA-queuosine biosynthesis. Its function is as follows. Catalyzes the NADPH-dependent reduction of 7-cyano-7-deazaguanine (preQ0) to 7-aminomethyl-7-deazaguanine (preQ1). This chain is NADPH-dependent 7-cyano-7-deazaguanine reductase, found in Oceanobacillus iheyensis (strain DSM 14371 / CIP 107618 / JCM 11309 / KCTC 3954 / HTE831).